Here is a 423-residue protein sequence, read N- to C-terminus: Zinc finger protein Gfi-1 (423 aa).

The tract at residues 1 to 20 is SNAG domain; it reads MPRSFLVKSKKAHSYHQPRS. Residues 1–102 form a disordered region; that stretch reads MPRSFLVKSK…PPSPSVSPAS (102 aa). Phosphoserine is present on residues serine 20 and serine 57. Positions 48–57 are enriched in basic and acidic residues; the sequence is SKMEPRERLS. The segment at 141–258 is required for interaction with RELA; that stretch reads RQCSALERSA…LLLGGGSYKC (118 aa). C2H2-type zinc fingers lie at residues 256–279, 285–307, 313–335, 341–363, 369–391, and 397–420; these read YKCIKCSKVFSTPHGLEVHVRRSH, FACEMCGKTFGHAVSLEQHKAVH, FDCKICGKSFKRSSTLSTHLLIH, YPCQYCGKRFHQKSDMKKHTFIH, HKCQVCGKAFSQSSNLITHSRKH, and FGCDLCGKGFQRKVDLRRHRETQH.

Interacts with U2AF1L4. Component of RCOR-GFI-KDM1A-HDAC complexes. Interacts directly with RCOR1, KDM1A and HDAC2. Also interacts with HDAC1. regions. Interacts (via the zinc-finger domain) with ARIH2; the interaction prevents GFI1 ubiquitination and proteasomal degradation. Interacts with PIAS3; the interaction relieves the inhibitory effect of PIAS3 on STAT3-mediated transcriptional activity. Forms a complex with EHMT2 and HDAC1 to promote 'Lys-9' dimethylation of H3 (H3K9Me2) and repress expression of target genes. Interacts directly with EHMT2. Component of the GFI1-AJUBA-HDAC1 repressor complex. Interacts directly with AJUBA (via ITS LIM domains); the interaction results in the HDAC-dependent corepression of a subset of GFI1 target genes and, occurs independent of the SNAG domain. Interacts with SPI1; the interaction inhibits SPI1 transcriptional activity targeted at macrophage-specific genes, repressing macrophage differentiation of myeloid progenitor cells and promoting granulocyte commitment. Interacts with RUNX1T1; the interaction represses HDAC-mediated transcriptional activity. Interacts with RELA; the interaction occurs on liposaccharide (LPS) stimulation controls RELA DNA binding activity and regulates endotoxin-mediated TOLL-like receptor inflammatory response. Interacts (via the C-terminal zinc fingers) with ZBTB17; the interaction results in the recruitment of GFI1 to the CDKN1A/p21 promoter and repression of CDKN1A/p21 transcription. Post-translationally, ubiquitinated. In terms of tissue distribution, restricted to lymphoid tissues and testes in adult animals.

Its subcellular location is the nucleus. In terms of biological role, transcription repressor essential for hematopoiesis. Functions in a cell-context and development-specific manner. Binds to 5'-TAAATCAC[AT]GCA-3' in the promoter region of a large number of genes. Component of several complexes, including the EHMT2-GFI1-HDAC1, AJUBA-GFI1-HDAC1 and RCOR-GFI-KDM1A-HDAC complexes, that suppress, via histone deacetylase (HDAC) recruitment, a number of genes implicated in multilineage blood cell development. Regulates neutrophil differentiation, promotes proliferation of lymphoid cells, and is required for granulocyte development. Inhibits SPI1 transcriptional activity at macrophage-specific genes, repressing macrophage differentiation of myeloid progenitor cells and promoting granulocyte commitment. Mediates, together with U2AF1L4, the alternative splicing of CD45 and controls T-cell receptor signaling. Regulates the endotoxin-mediated Toll-like receptor (TLR) inflammatory response by antagonizing RELA. Cooperates with CBFA2T2 to regulate ITGB1-dependent neurite growth. Controls cell-cycle progression by repressing CDKNIA/p21 transcription in response to TGFB1 via recruitment of GFI1 by ZBTB17 to the CDKNIA/p21 and CDKNIB promoters. Required for the maintenance of inner ear hair cells. In addition to its role in transcription, acts as a substrate adapter for PRMT1 in the DNA damage response: facilitates the recognition of TP53BP1 and MRE11 substrates by PRMT1, promoting their methylation and the DNA damage response. The chain is Zinc finger protein Gfi-1 (Gfi1) from Rattus norvegicus (Rat).